The following is a 401-amino-acid chain: Tryptophan synthase beta chain (401 aa).

An N6-(pyridoxal phosphate)lysine modification is found at Lys-88.

The protein belongs to the TrpB family. As to quaternary structure, tetramer of two alpha and two beta chains. Pyridoxal 5'-phosphate is required as a cofactor.

It catalyses the reaction (1S,2R)-1-C-(indol-3-yl)glycerol 3-phosphate + L-serine = D-glyceraldehyde 3-phosphate + L-tryptophan + H2O. Its pathway is amino-acid biosynthesis; L-tryptophan biosynthesis; L-tryptophan from chorismate: step 5/5. The beta subunit is responsible for the synthesis of L-tryptophan from indole and L-serine. This Shewanella denitrificans (strain OS217 / ATCC BAA-1090 / DSM 15013) protein is Tryptophan synthase beta chain.